A 918-amino-acid polypeptide reads, in one-letter code: MVTCVPASEQVGCAERDSQVYCEDTGGTEAVRVTDCGSPEDSGPQDEPSYCNSEDSGQLMASYEGKARGYQVPPFGWRICLAHEFAEKRRPFQANNISLSNLVKHLGMGLRYLKWWYRKTHVEKKTPFIDMLNSLPLRQIYGCPLGGIGGGTITRGWRGQFCRWQLNPGMYQHQTVIADQFIVCLRRDGRTVYQQVLSLELPNVLRSWNWGLCGYFAFYHALYPRAWTVYQLPGQNVTLTCRQVTPILPHDYQDSSLPVGVFVWDVENEGDETLDVSITFSMRNGLGGEDDAAGSLWNEPFRLEQGGTTVQGLLLHHPTPPNPYTMAVAARCTADTTVTHTTAFDPNGTGQQVWQDLLQDGQLDSPAGQSTPTQKGEGIAGAVCVSSKLLPRSRCCLEFSLAWDMPKIMFGAKSQVHYRRYTRFFGSDGDVAPALSHYALCHYADWEDRISAWQNPVLDDRTLPAWYKSALFNELYFLADGGTVWLEVPADSLPEGLGGSMRQLRSTLQDYGRFGYLEGQEYRMYNTYDVHFYASFALVMLWPKLELSLQYDMALATLKEDLTRRRYLMSGVVAPVKRRNVIPHDIGDPDDEPWLRVNAYLIHDTADWKDLNLKFVLQIYRDYYLTGDQGFLEDMWPVCLAVMESEMKFDKDQDGLIENGGYADQTYDAWVTTGPSAYCGGLWLAAVAVMVQMAVLCGAQDVQERFASILCRGREAYERLLWNGRYYNYDSSSHPQSRSIMSDQCAGQWFLRACGLGEGDTEVFPTLHVVRALQTIFELNVQAFAGGAMGAVNGMHPHGVPDRSSVQSDEVWVGVVYGLAATMIQEGLTWEGFRTAEGCYRTVWERLGLAFQTPEAYCQQQVFRSLAYMRPLSIWAMQLALQQQQHKKSRRPSVTQGTGLSTQPECGPKRSLANLNSE.

Residues 886–918 (HKKSRRPSVTQGTGLSTQPECGPKRSLANLNSE) are disordered. The segment covering 892–904 (PSVTQGTGLSTQP) has biased composition (polar residues). Residue serine 893 is modified to Phosphoserine.

The protein belongs to the non-lysosomal glucosylceramidase family. In terms of tissue distribution, widely expressed at low level. Highly expressed in testis and brain. Ubiquitously expressed in the brain (at protein level). Expressed by Sertoli cells (at protein level).

It localises to the endoplasmic reticulum membrane. It is found in the golgi apparatus membrane. The enzyme catalyses a beta-D-glucosyl-(1&lt;-&gt;1')-N-acylsphing-4-enine + H2O = an N-acylsphing-4-enine + D-glucose. It catalyses the reaction a beta-D-galactosyl-(1&lt;-&gt;1')-N-acylsphing-4-enine + H2O = an N-acylsphing-4-enine + D-galactose. It carries out the reaction beta-D-glucosyl-(1-&gt;3)-O-lithocholate + H2O = lithocholate + D-glucose. The catalysed reaction is beta-D-glucosyl-(1-&gt;3)-O-chenodeoxycholate + H2O = chenodeoxycholate + D-glucose. The enzyme catalyses a di-trans,poly-cis-dolichyl beta-D-glucosyl phosphate + chenodeoxycholate = beta-D-glucosyl-(1-&gt;3)-O-chenodeoxycholate + a di-trans,poly-cis-dolichyl phosphate + H(+). It catalyses the reaction octyl beta-D-glucose + chenodeoxycholate = beta-D-glucosyl-(1-&gt;3)-O-chenodeoxycholate + octan-1-ol. It carries out the reaction cholesteryl 3-beta-D-glucoside + H2O = cholesterol + D-glucose. The catalysed reaction is a beta-D-glucosyl-(1&lt;-&gt;1')-N-acylsphing-4-enine + cholesterol = cholesteryl 3-beta-D-glucoside + an N-acylsphing-4-enine. The enzyme catalyses beta-D-glucosyl-N-(9Z-octadecenoyl)-sphing-4E-enine + cholesterol = N-(9Z-octadecenoyl)-sphing-4-enine + cholesteryl 3-beta-D-glucoside. It catalyses the reaction a beta-D-galactosyl-(1&lt;-&gt;1')-N-acylsphing-4-enine + cholesterol = cholesteryl 3-beta-D-galactoside + an N-acylsphing-4-enine. It carries out the reaction 1-(beta-D-galactosyl)-N-dodecanoylsphing-4-enine + cholesterol = cholesteryl 3-beta-D-galactoside + N-dodecanoylsphing-4-enine. Its pathway is lipid metabolism; sphingolipid metabolism. It functions in the pathway steroid metabolism; cholesterol metabolism. With respect to regulation, enzymatic activity is dependent on membrane association and requires the presence of lipids. Inhibited by N-(adamantanemethyloxypentyl)-deoxynojirimycin/AMP-DNM. Inhibited by its product sphingosine/N-acylsphing-4-enine in a feedback loop. Also inhibited by other non-acetylated sphingoid bases and their derivatives but not by sphingosine-1-phosphate and complex sphingolipids. Its function is as follows. Non-lysosomal glucosylceramidase that catalyzes the hydrolysis of glucosylceramides/GlcCers (such as beta-D-glucosyl-(1&lt;-&gt;1')-N-acylsphing-4-enine) to free glucose and ceramides (such as N-acylsphing-4-enine). GlcCers are membrane glycosphingolipids that have a wide intracellular distribution. They are the main precursors of more complex glycosphingolipids that play a role in cellular growth, differentiation, adhesion, signaling, cytoskeletal dynamics and membrane properties. Also involved in the transglucosylation of cholesterol, transferring glucose from GlcCer, thereby modifying its water solubility and biological properties. Under specific conditions, may catalyze the reverse reaction, transferring glucose from cholesteryl-3-beta-D-glucoside to ceramide (such as N-acylsphing-4-enine). May play a role in the metabolism of bile acids. Able to hydrolyze bile acid 3-O-glucosides as well as to produce bile acid-glucose conjugates thanks to a bile acid glucosyl transferase activity. Catalyzes the hydrolysis of galactosylceramides/GalCers (such as beta-D-galactosyl-(1&lt;-&gt;1')-N-acylsphing-4-enine), as well as galactosyl transfer between GalCers and cholesterol in vitro with lower activity compared with their activity against GlcCers. In Mus musculus (Mouse), this protein is Non-lysosomal glucosylceramidase.